A 182-amino-acid chain; its full sequence is ADP-ribosylation factor 1 (182 aa).

The N-myristoyl glycine moiety is linked to residue G2. Residues 24–31 (GLDNAGKT), 67–71 (DLGGQ), and 126–129 (NKQD) each bind GTP.

This sequence belongs to the small GTPase superfamily. Arf family.

It is found in the golgi apparatus. The enzyme catalyses GTP + H2O = GDP + phosphate + H(+). In terms of biological role, GTP-binding protein involved in protein trafficking; may modulate vesicle budding and uncoating within the Golgi apparatus. The chain is ADP-ribosylation factor 1 (ARF1) from Brassica rapa subsp. pekinensis (Chinese cabbage).